A 206-amino-acid polypeptide reads, in one-letter code: FMN-dependent NADH:quinone oxidoreductase 2 (206 aa).

Ser-10 provides a ligand contact to FMN.

It belongs to the azoreductase type 1 family. Homodimer. The cofactor is FMN.

The catalysed reaction is 2 a quinone + NADH + H(+) = 2 a 1,4-benzosemiquinone + NAD(+). It carries out the reaction N,N-dimethyl-1,4-phenylenediamine + anthranilate + 2 NAD(+) = 2-(4-dimethylaminophenyl)diazenylbenzoate + 2 NADH + 2 H(+). Functionally, quinone reductase that provides resistance to thiol-specific stress caused by electrophilic quinones. Also exhibits azoreductase activity. Catalyzes the reductive cleavage of the azo bond in aromatic azo compounds to the corresponding amines. This chain is FMN-dependent NADH:quinone oxidoreductase 2, found in Rhizobium etli (strain ATCC 51251 / DSM 11541 / JCM 21823 / NBRC 15573 / CFN 42).